The primary structure comprises 883 residues: Protein argonaute 16 (883 aa).

Positions 254 to 366 constitute a PAZ domain; sequence PVFDFLLTNQ…VPIELCHMVS (113 aa). The Piwi domain maps to 535 to 844; the sequence is FLLCVLPERK…AAAQMGQFMK (310 aa).

It belongs to the argonaute family. Ago subfamily.

Its function is as follows. Probably involved in the RNA silencing pathway. May bind to short RNAs such as microRNAs (miRNAs) or short interfering RNAs (siRNAs), and represses the translation of mRNAs which are complementary to them. This is Protein argonaute 16 (AGO16) from Oryza sativa subsp. japonica (Rice).